A 530-amino-acid chain; its full sequence is Phosphoenolpyruvate carboxykinase (ATP) (530 aa).

3 residues coordinate substrate: arginine 58, tyrosine 195, and lysine 201. ATP is bound by residues lysine 201, histidine 220, and 236–244 (GLSGTGKTT). 2 residues coordinate Mn(2+): lysine 201 and histidine 220. Position 257 (aspartate 257) interacts with Mn(2+). Residues glutamate 285, arginine 321, 440–441 (RI), and threonine 446 contribute to the ATP site. A substrate-binding site is contributed by arginine 321.

This sequence belongs to the phosphoenolpyruvate carboxykinase (ATP) family. Requires Mn(2+) as cofactor.

It is found in the cytoplasm. The catalysed reaction is oxaloacetate + ATP = phosphoenolpyruvate + ADP + CO2. It participates in carbohydrate biosynthesis; gluconeogenesis. Functionally, involved in the gluconeogenesis. Catalyzes the conversion of oxaloacetate (OAA) to phosphoenolpyruvate (PEP) through direct phosphoryl transfer between the nucleoside triphosphate and OAA. This is Phosphoenolpyruvate carboxykinase (ATP) from Staphylococcus aureus (strain MSSA476).